The primary structure comprises 339 residues: MKRIAVLTSGGDAPGMNAAVRAVVLKAISEGIEVFGINRGYAGMVEGDIFKLDAKRVENILSRGGTFLQSARYPEFAQLEGQLKGIEQLKKYGIEGVVVIGGDGSYHGAMRLTEHGFPAVGLPGTIDNDIVGTDYTIGFDTAVATATEALDKIQDTAFSHGRTFVVEVMGRNAGDIALWAGIASGADQIIVPEEEYDINEVVRKVKEGYESGEKSHHIIVLAEGVMGAEEFAAKMKEAGDTSDLRATNLGHVIRGGSPTARDRVLASWMGAHAVDLLKEGIGGVAVGIHNEQLVESPILGTAEEGALFSLTEDGKIIVNNPHKARLDFAELNRSLANLK.

ATP contacts are provided by residues glycine 11, arginine 72–tyrosine 73, and glycine 102–serine 105. Mg(2+) is bound at residue aspartate 103. Substrate-binding positions include threonine 125–aspartate 127, arginine 162, and methionine 169–arginine 171. The active-site Proton acceptor is aspartate 127. ADP-binding positions include glycine 185–aspartate 187 and lysine 214–histidine 216. Residues glutamate 223, arginine 245, and histidine 251–arginine 254 each bind substrate.

This sequence belongs to the phosphofructokinase type A (PFKA) family. ATP-dependent PFK group I subfamily. Prokaryotic clade 'B1' sub-subfamily. Homotetramer. Requires Mg(2+) as cofactor.

It localises to the cytoplasm. The enzyme catalyses beta-D-fructose 6-phosphate + ATP = beta-D-fructose 1,6-bisphosphate + ADP + H(+). The protein operates within carbohydrate degradation; glycolysis; D-glyceraldehyde 3-phosphate and glycerone phosphate from D-glucose: step 3/4. Allosterically activated by ADP and other diphosphonucleosides, and allosterically inhibited by phosphoenolpyruvate. In terms of biological role, catalyzes the phosphorylation of D-fructose 6-phosphate to fructose 1,6-bisphosphate by ATP, the first committing step of glycolysis. This chain is ATP-dependent 6-phosphofructokinase, found in Streptococcus thermophilus (strain ATCC BAA-491 / LMD-9).